Consider the following 314-residue polypeptide: Protein translocase subunit SecF (314 aa).

The next 6 helical transmembrane spans lie at 17–37 (AVAV…TRGL), 137–157 (QGTY…WWRY), 158–178 (ELNF…ITLG), 188–210 (SLPV…IVVF), 250–270 (TLIV…GFAF), and 272–292 (LLVG…LLLV).

It belongs to the SecD/SecF family. SecF subfamily. In terms of assembly, forms a complex with SecD. Part of the essential Sec protein translocation apparatus which comprises SecA, SecYEG and auxiliary proteins SecDF. Other proteins may also be involved.

The protein localises to the cell inner membrane. Part of the Sec protein translocase complex. Interacts with the SecYEG preprotein conducting channel. SecDF uses the proton motive force (PMF) to complete protein translocation after the ATP-dependent function of SecA. This is Protein translocase subunit SecF from Desulfurispirillum indicum (strain ATCC BAA-1389 / DSM 22839 / S5).